The chain runs to 119 residues: MIYWILLALAIVSEITGTLALKWASVGGGHAGFILMLVMISLSYILLSFSVKRIALGVAYALWEGVGIVLITLFSVLLFNETLTVQKALGLLVLIAGILLIKTGTRTVSRKAEVRHVAG.

4 consecutive transmembrane segments (helical) span residues 1–21, 31–51, 54–74, and 81–101; these read MIYW…TLAL, AGFI…SFSV, IALG…ITLF, and ETLT…ILLI.

This sequence belongs to the drug/metabolite transporter (DMT) superfamily. Small multidrug resistance (SMR) (TC 2.A.7.1) family. MdtJ subfamily. Forms a complex with MdtI.

The protein localises to the cell inner membrane. In terms of biological role, catalyzes the excretion of spermidine. The polypeptide is Spermidine export protein MdtJ (mdtJ) (Cronobacter sakazakii (strain ATCC BAA-894) (Enterobacter sakazakii)).